We begin with the raw amino-acid sequence, 552 residues long: Putative transport protein APL_0966 (552 aa).

5 helical membrane passes run 4–24 (IAII…IGHI), 29–49 (VGLG…CTHL), 65–85 (FGLI…FFAS), 95–115 (GFAV…HKLF), and 161–181 (IAYP…RIIF). RCK C-terminal domains follow at residues 190–275 (QEFD…ILGE) and 277–360 (ADVS…IIGD). 6 helical membrane-spanning segments follow: residues 370 to 390 (MLPI…PLYI), 402 to 424 (AGGP…LYWF), 438 to 458 (IVLF…DTLL), 463 to 483 (LAWM…TGFV), 492 to 512 (YLSL…LAFA), and 529 to 549 (VYPL…ILLW).

It belongs to the AAE transporter (TC 2.A.81) family. YidE subfamily.

The protein localises to the cell membrane. In Actinobacillus pleuropneumoniae serotype 5b (strain L20), this protein is Putative transport protein APL_0966.